Here is a 385-residue protein sequence, read N- to C-terminus: UPF0284 protein A9601_04941 (385 aa).

This sequence belongs to the UPF0284 family.

The sequence is that of UPF0284 protein A9601_04941 from Prochlorococcus marinus (strain AS9601).